The following is a 2752-amino-acid chain: Piezo-type mechanosensitive ion channel component 2 (2752 aa).

Over 1 to 12 (MASEVVCGLIFR) the chain is Cytoplasmic. A helical transmembrane segment spans residues 13 to 24 (LLLPICLAVACA). Residues 25-30 (FRYNGL) are Extracellular-facing. Residues 31–43 (SFVYLIYLLLIPL) traverse the membrane as a helical segment. Topologically, residues 44 to 50 (FSEPTKT) are cytoplasmic. A helical transmembrane segment spans residues 51 to 76 (TMQGHTGRLLKSLCFISLSFLLLHII). The Extracellular portion of the chain corresponds to 77-122 (FHITLVSLEAQHRIAPGYNCSTWEKTFRQIGFESLKGADAGNGIRV). Asparagine 95 carries an N-linked (GlcNAc...) asparagine glycan. Residues 123 to 141 (FVPDIGMFIASLTIWLLCR) form a helical membrane-spanning segment. Over 142–221 (NIVQKPVTDE…KEFIGNMITT (80 aa)) the chain is Cytoplasmic. Residues 222–237 (AGKVVVTILLGSSGMM) traverse the membrane as a helical segment. Residues 238–240 (LPS) lie on the Extracellular side of the membrane. The chain crosses the membrane as a helical span at residues 241–258 (LTSSVYFFVFLGLCTWWS). Residues 259-264 (WCRTFD) are Cytoplasmic-facing. A helical transmembrane segment spans residues 265–287 (PLLFSCLCVLLAIFTAGHLIGLY). Residues 288–335 (LYQFQFFQEAVPPNDYYARLFGIKSVIQTDCSSTWKIIVNPDLSWYHH) lie on the Extracellular side of the membrane. A helical membrane pass occupies residues 336–355 (ANPILLLVMYYTLATLIRIW). At 356-492 (LQEPLVQDEG…SIKVHAMVSV (137 aa)) the chain is on the cytoplasmic side. The interval 446 to 478 (STPQYRWEPSDESSEKREEEEEEKEEFEEERSR) is disordered. A compositionally biased stretch (acidic residues) spans 463–474 (EEEEEEKEEFEE). Residues 493 to 514 (FQFIMKQSYICALIAMMAWSIT) traverse the membrane as a helical segment. Residues 515–519 (YHSWL) lie on the Extracellular side of the membrane. A helical transmembrane segment spans residues 520–531 (TFVLLIWSCTLW). Over 532-535 (MIRN) the chain is Cytoplasmic. The helical transmembrane segment at 536–562 (RRKYAMISSPFMVVYGNLLLILQYIWS) threads the bilayer. The Extracellular segment spans residues 563–583 (FELPEIKKVPGFLEKKEPGEL). A helical membrane pass occupies residues 584 to 614 (ASKILFTITFWLLLRQHLTEQKALQEKEALL). The Cytoplasmic portion of the chain corresponds to 615–685 (SEVKIGSQEN…GNLVVAMFIK (71 aa)). A compositionally biased stretch (acidic residues) spans 623-632 (ENEEKDEELQ). Positions 623–664 (ENEEKDEELQDIQVEGEPKEEEEEEAKEEKQERKKVEQEEAE) are disordered. The segment covering 649-660 (KEEKQERKKVEQ) has biased composition (basic and acidic residues). The helical transmembrane segment at 686–699 (YWIYVCGGMFFFVS) threads the bilayer. The Extracellular segment spans residues 700–705 (FEGKIV). The chain crosses the membrane as a helical span at residues 706–724 (MYKIIYMVLFLFCVALYQV). Over 725 to 733 (HYEWWRKIL) the chain is Cytoplasmic. The chain crosses the membrane as a helical span at residues 734 to 753 (KYFWMSVVIYTMLVLIFIYT). Over 754–785 (YQFENFPGLWQNMTGLKKEKLEDLGLKQFTVA) the chain is Extracellular. The helical transmembrane segment at 786 to 807 (ELFTRIFIPTSFLLVCILHLHY) threads the bilayer. The Cytoplasmic portion of the chain corresponds to 808–940 (FHDRFLELTD…QVFMWWILEL (133 aa)). Serine 838 carries the phosphoserine modification. Basic and acidic residues predominate over residues 862–883 (PGEEKLEGYSEKAQKGDLGKDS). Residues 862-902 (PGEEKLEGYSEKAQKGDLGKDSEESEEDGEEEEESEEEEET) are disordered. The span at 884–902 (EESEEDGEEEEESEEEEET) shows a compositional bias: acidic residues. Residues 941–956 (HIIKIVSSYIIWVSVK) form a helical membrane-spanning segment. Topologically, residues 957–962 (EVSLFN) are extracellular. A helical membrane pass occupies residues 963–972 (YVFLISWAFA). The Cytoplasmic segment spans residues 973–980 (LPYAKLRR). A helical transmembrane segment spans residues 981–1001 (LASSVCTVWTCVIIVCKMLYQ). At 1002–1057 (LQTIKPENFSVNCSLPNENQTNIPFNELNKSLLYSAPIDPTEWVGLRKSSPLLVYL) the chain is on the extracellular side. Asparagine 1013 is a glycosylation site (N-linked (GlcNAc...) asparagine). Cysteine 1014 and cysteine 1192 form a disulfide bridge. Residues 1058 to 1082 (RNNLLMLAILAFEVTIYRHQEYYRG) form a helical membrane-spanning segment. Topologically, residues 1083 to 1123 (RNNLTAPVSRTIFHDITRLHLDDGLINCAKYFINYFFYKFG) are cytoplasmic. The helical transmembrane segment at 1124 to 1138 (LETCFLMSVNVIGQR) threads the bilayer. At 1139 to 1140 (MD) the chain is on the extracellular side. A helical transmembrane segment spans residues 1141 to 1154 (FYAMIHACWLIAVL). The Cytoplasmic segment spans residues 1155-1165 (YRRRRKAIAEI). Residues 1166-1185 (WPKYCCFLACIITFQYFICI) form a helical membrane-spanning segment. At 1186 to 1222 (GIPPAPCRDYPWRFKGASFNDNIIKWLYFPDFIVRPN) the chain is on the extracellular side. The chain crosses the membrane as a helical span at residues 1223–1243 (PVFLVYDFMLLLCASLQRQIF). The Cytoplasmic segment spans residues 1244–1297 (EDENKAAVRIMAGDNVEICMNLDAASFSQHNPVPDFIHCRSYLDMSKVIIFSYL). A helical membrane pass occupies residues 1298-1310 (FWFVLTIIFITGT). The Extracellular portion of the chain corresponds to 1311–1316 (TRISIF). A helical transmembrane segment spans residues 1317 to 1329 (CMGYLVACFYFLL). Residues 1330 to 1338 (FGGDLLLKP) lie on the Cytoplasmic side of the membrane. The chain crosses the membrane as a helical span at residues 1339-1364 (IKSILRYWDWLIAYNVFVITMKNILS). Topologically, residues 1365–1413 (IGACGYIGTLVHNSCWLIQAFSLACTVKGYQMPAANSPCTLPSGEAGII) are extracellular. A helical membrane pass occupies residues 1414–1430 (WDSICFAFLLLQRRVFM). Over 1431-1921 (SYYFLHVVAD…YAMYNTLVAR (491 aa)) the chain is Cytoplasmic. Positions 1458-1529 (TIVKAVKARI…EREADKQKAK (72 aa)) form a coiled coil. 3 disordered regions span residues 1488–1534 (QQKY…KKKQ), 1593–1636 (ALRQ…KKSD), and 1844–1868 (SQDD…KLGS). A compositionally biased stretch (basic residues) spans 1594–1615 (LRQRHKEKKRSAREERKRRRKG). Residues 1922-1936 (SEMVCYFVIILNHMV) form a helical membrane-spanning segment. Over 1937 to 1943 (SASMITL) the chain is Extracellular. The chain crosses the membrane as a helical span at residues 1944–1955 (LLPILIFLWAML). Over 1956–1961 (SVPRPS) the chain is Cytoplasmic. The helical transmembrane segment at 1962-1983 (RRFWMMAIVYTEVAIVVKYFFQ) threads the bilayer. The Extracellular portion of the chain corresponds to 1984–2016 (FGFFPWNKNVEVNKDKPYHPPNIIGVEKKEGYV). A helical membrane pass occupies residues 2017-2035 (LYDLIQLLALFFHRSILKC). The Cytoplasmic segment spans residues 2036–2189 (HGLWDEDDMT…HPEYSAVTDV (154 aa)). 2 disordered regions span residues 2047 to 2069 (SGMA…DSSD) and 2090 to 2135 (QQTA…SVLS). The span at 2100 to 2127 (GSSSEPSQRSSFSSNRSQRGSTSTRNSS) shows a compositional bias: low complexity. The helical transmembrane segment at 2190–2209 (YVLMFLADTVDFIIIVFGFW) threads the bilayer. Topologically, residues 2210 to 2231 (AFGKHSAAADITSSLSEDQVPG) are extracellular. Residues 2232 to 2252 (PFLVMVLIQFGTMVVDRALYL) form a helical membrane-spanning segment. At 2253–2256 (RKTV) the chain is on the cytoplasmic side. Residues 2257–2280 (LGKVIFQVILVFGIHFWMFFILPG) traverse the membrane as a helical segment. Residues 2281–2289 (VTERKFSQN) lie on the Extracellular side of the membrane. The helical transmembrane segment at 2290–2312 (LVAQLWYFVKCVYFGLSAYQIRC) threads the bilayer. At 2313-2397 (GYPTRVLGNF…YPQPRGQKKK (85 aa)) the chain is on the cytoplasmic side. Residues 2398 to 2421 (KVVKYGMGGMIIVLLICIVWFPLL) traverse the membrane as a helical segment. Topologically, residues 2422–2669 (FMSLIKSVAG…PSLGFLAGYG (248 aa)) are extracellular. The helical transmembrane segment at 2670–2690 (IMGLYASVVLVIGKFVREFFS) threads the bilayer. The Cytoplasmic segment spans residues 2691 to 2752 (GISHSIMFEE…MIKWTREKTN (62 aa)).

The protein belongs to the PIEZO (TC 1.A.75) family. In terms of assembly, homotrimer; the homotrimer forms a propeller-shaped Piezo channel with a cation-ion conducting pore. Heterotrimeric interaction may occur between PIEZO1 and PIEZO2. Interacts with STOML3. Interacts with TMC7; the interaction inhibits PIEZO2-conducted mechanically activated currents. Interacts with TMC1; the interaction may be part of the MET complex. Interacts with MDFIC (via C-terminus); the interaction prolongs Piezo channel inactivation. Interacts with MDFI (via C-terminus); the interaction prolongs Piezo channel inactivation.

Its subcellular location is the cell membrane. The catalysed reaction is Ca(2+)(in) = Ca(2+)(out). With respect to regulation, regulated by auxillary subunits MDFIC and MDFI. Channel activity is inhibited by TMEM120A. Phosphatidic acid and lysophosphatidic acid inhibit PIEZO2 channel activity. Functionally, pore-forming subunit of the mechanosensitive non-specific cation Piezo channel required for rapidly adapting mechanically activated (MA) currents and has a key role in sensing touch and tactile pain. Piezo channels are homotrimeric three-blade propeller-shaped structures that utilize a cap-motion and plug-and-latch mechanism to gate their ion-conducting pathways. Expressed in sensory neurons, is essential for diverse physiological processes, including respiratory control, systemic metabolism, urinary function, and proprioception. Mediates airway stretch sensing, enabling efficient respiration at birth and maintaining normal breathing in adults. It regulates brown and beige adipose tissue morphology and function, preventing systemic hypermetabolism. In the lower urinary tract, acts as a sensor in both the bladder urothelium and innervating sensory neurons being required for bladder-stretch sensing and urethral micturition reflexes, ensuring proper urinary function. Additionally, PIEZO2 serves as the principal mechanotransducer in proprioceptors, facilitating proprioception and coordinated body movements. In inner ear hair cells, PIEZO1/2 subunits may constitute part of the mechanotransducer (MET) non-selective cation channel complex where they may act as pore-forming ion-conducting component in the complex. Required for Merkel-cell mechanotransduction. Plays a major role in light-touch mechanosensation. The chain is Piezo-type mechanosensitive ion channel component 2 from Homo sapiens (Human).